Consider the following 408-residue polypeptide: S-adenosylmethionine synthase (408 aa).

His-16 lines the ATP pocket. Residue Asp-18 coordinates Mg(2+). Position 44 (Glu-44) interacts with K(+). L-methionine is bound by residues Glu-57 and Gln-100. Residues 100–110 are flexible loop; that stretch reads QSPEINQGVSR. ATP is bound by residues 177 to 179, Asp-257, 263 to 264, Ala-280, and Lys-284; these read DGK and RK. Asp-257 lines the L-methionine pocket. An L-methionine-binding site is contributed by Lys-288.

It belongs to the AdoMet synthase family. In terms of assembly, homotetramer; dimer of dimers. The cofactor is Mg(2+). Requires K(+) as cofactor.

The protein resides in the cytoplasm. It carries out the reaction L-methionine + ATP + H2O = S-adenosyl-L-methionine + phosphate + diphosphate. It functions in the pathway amino-acid biosynthesis; S-adenosyl-L-methionine biosynthesis; S-adenosyl-L-methionine from L-methionine: step 1/1. In terms of biological role, catalyzes the formation of S-adenosylmethionine (AdoMet) from methionine and ATP. The overall synthetic reaction is composed of two sequential steps, AdoMet formation and the subsequent tripolyphosphate hydrolysis which occurs prior to release of AdoMet from the enzyme. In Bifidobacterium animalis subsp. lactis (strain AD011), this protein is S-adenosylmethionine synthase.